Reading from the N-terminus, the 747-residue chain is Ferrichrome outer membrane transporter/phage receptor (747 aa).

Positions 1–33 (MARSKTAQPKHSLRKIAVVVATAVSGMSVYAQA) are cleaved as a signal peptide. Residues 34 to 192 (AVEPKEDTIT…NMVSKRPTTE (159 aa)) lie on the Periplasmic side of the membrane. The TonB box signature appears at 40 to 47 (DTITVTAA). The TBDR plug domain maps to 75 to 187 (PIQKVPQSIS…PGGLLNMVSK (113 aa)). Residues Arg114, Gln133, and 148–149 (FY) each bind ferrichrome. Residues 192–747 (EPLKEVQFKA…QVVATATFRF (556 aa)) enclose the TBDR beta-barrel domain. The beta stranded transmembrane segment at 193–201 (PLKEVQFKA) threads the bilayer. Topologically, residues 202-206 (GTDSL) are extracellular. The chain crosses the membrane as a beta stranded span at residues 207 to 215 (FQTGFDFSD). Topologically, residues 216 to 222 (SLDDDGV) are periplasmic. Residues 223 to 231 (YSYRLTGLA) traverse the membrane as a beta stranded segment. At 232–245 (RSANAQQKGSEEQR) the chain is on the extracellular side. A beta stranded transmembrane segment spans residues 246 to 255 (YAIAPAFTWR). Residues 256-259 (PDDK) are Periplasmic-facing. The beta stranded transmembrane segment at 260–268 (TNFTFLSYF) threads the bilayer. Residues 269–312 (QNEPETGYYGWLPKEGTVEPLPNGKRLPTDFNEGAKNNTYSRNE) are Extracellular-facing. 277–279 (YGW) is a binding site for ferrichrome. A beta stranded membrane pass occupies residues 313–321 (KMVGYSFDH). Over 322 to 326 (EFNDT) the chain is Periplasmic. Residues 327–335 (FTVRQNLRF) form a beta stranded membrane-spanning segment. Residues 336–387 (AENKTSQNSVYGYGVCSDPANAYSKQCAALAPADKGHYLARKYVVDDEKLQN) lie on the Extracellular side of the membrane. 346–348 (YGY) provides a ligand contact to ferrichrome. Residues Cys351 and Cys362 are joined by a disulfide bond. The beta stranded transmembrane segment at 388–396 (FSVDTQLQS) threads the bilayer. Over 397–404 (KFATGDID) the chain is Periplasmic. The beta stranded transmembrane segment at 405–413 (HTLLTGVDF) threads the bilayer. Residues 414 to 464 (MRMRNDINAWFGYDDSVPLLNLYNPVNTDFDFNAKDPANSGPYRILNKQKQ) are Extracellular-facing. Phe424 contacts ferrichrome. A beta stranded transmembrane segment spans residues 465–473 (TGVYVQDQA). The Periplasmic segment spans residues 474–477 (QWDK). Residues 478-486 (VLVTLGGRY) form a beta stranded membrane-spanning segment. Over 487-508 (DWADQESLNRVAGTTDKRDDKQ) the chain is Extracellular. The chain crosses the membrane as a beta stranded span at residues 509–517 (FTWRGGVNY). Topologically, residues 518-522 (LFDNG) are periplasmic. The beta stranded transmembrane segment at 523-531 (VTPYFSYSE) threads the bilayer. The Extracellular segment spans residues 532 to 551 (SFEPSSQVGKDGNIFAPSKG). A beta stranded transmembrane segment spans residues 552–560 (KQYEVGVKY). The Periplasmic segment spans residues 561 to 565 (VPEDR). The chain crosses the membrane as a beta stranded span at residues 566-574 (PIVVTGAVY). At 575–601 (NLTKTNNLMADPEGSFFSVEGGEIRAR) the chain is on the extracellular side. The chain crosses the membrane as a beta stranded span at residues 602 to 610 (GVEIEAKAA). The Periplasmic segment spans residues 611–613 (LSA). The beta stranded transmembrane segment at 614-622 (SVNVVGSYT) threads the bilayer. Over 623 to 645 (YTDAEYTTDTTYKGNTPAQVPKH) the chain is Extracellular. A beta stranded transmembrane segment spans residues 646 to 654 (MASLWADYT). The Periplasmic segment spans residues 655 to 661 (FFDGPLS). A beta stranded membrane pass occupies residues 662–670 (GLTLGTGGR). Residues 671–689 (YTGSSYGDPANSFKVGSYT) are Extracellular-facing. A beta stranded transmembrane segment spans residues 690-698 (VVDALVRYD). Residues 699 to 705 (LARVGMA) are Periplasmic-facing. Residues 706-714 (GSNVALHVN) traverse the membrane as a beta stranded segment. Residues 715 to 737 (NLFDREYVASCFNTYGCFWGAER) are Extracellular-facing. Cys725 and Cys731 are disulfide-bonded. The TonB C-terminal box signature appears at 730 to 747 (GCFWGAERQVVATATFRF). Position 735 (Ala735) interacts with ferrichrome. The beta stranded transmembrane segment at 738–746 (QVVATATFR) threads the bilayer. Residue Phe747 is a topological domain, periplasmic.

Belongs to the TonB-dependent receptor family. As to quaternary structure, monomer. Interacts with TonB. Interacts with Escherichia phage T5 receptor-binding protein pb5 (RBP-pb5); this interaction is necessary for the entry of the viral genome into the host cell.

The protein resides in the cell outer membrane. With respect to regulation, binding of ferrichrome or colicin M enhances the interaction between FhuA and TonB. TonB activates FhuA through interaction with the beta-barrel. Functionally, involved in the uptake of iron in complex with ferrichrome, a hydroxamate-type siderophore. Binds and transports ferrichrome-iron across the outer membrane. In addition to its role in ferrichrome-iron transport, transports the antibiotic albomycin, which is a structural analog of ferrichrome, and acts as a receptor for colicin M, microcin J25 and bacteriophages T1, T5, phi80 and UC-1. The energy source, which is required for all FhuA functions except infection by phage T5, is provided by the inner membrane TonB system. In Escherichia coli (strain K12), this protein is Ferrichrome outer membrane transporter/phage receptor.